The primary structure comprises 174 residues: Co-chaperone protein HscB homolog (174 aa).

A J domain is found at asparagine 2–leucine 74.

Belongs to the HscB family. Interacts with HscA and stimulates its ATPase activity.

In terms of biological role, co-chaperone involved in the maturation of iron-sulfur cluster-containing proteins. Seems to help targeting proteins to be folded toward HscA. This Shewanella baltica (strain OS223) protein is Co-chaperone protein HscB homolog.